The chain runs to 222 residues: Transmembrane protein 114 (222 aa).

Residues 7-27 traverse the membrane as a helical segment; the sequence is ALAGAAALSGALSFVLLAAAI. 2 N-linked (GlcNAc...) asparagine glycosylation sites follow: N54 and N88. A run of 3 helical transmembrane segments spans residues 105–125, 133–153, and 188–208; these read FVIL…TGFL, LLLL…LTGI, and LALG…FLAA.

Its subcellular location is the cell junction. The protein localises to the tight junction. The protein resides in the lateral cell membrane. It localises to the apical cell membrane. This Mus musculus (Mouse) protein is Transmembrane protein 114.